We begin with the raw amino-acid sequence, 264 residues long: 2',3'-cyclic-nucleotide 2'-phosphodiesterase (264 aa).

Positions 8, 39, 40, and 67 each coordinate Fe cation. His68 serves as the catalytic Proton donor. Fe cation is bound by residues His150, His175, and His177.

This sequence belongs to the YmdB-like family. In terms of assembly, homodimer. Fe(2+) is required as a cofactor. Fe(3+) serves as cofactor.

It is found in the cytoplasm. The catalysed reaction is a nucleoside 2',3'-cyclic phosphate + H2O = a nucleoside 3'-phosphate + H(+). In terms of biological role, plays a central, regulatory role in the late adaptive responses and affects the levels of many genes. May act via regulation of cAMP levels. Decreases the expression of motility genes and induces genes involved in biofilm formation, by controlling the expression of SlrR. Required for formation of intercellular nanotubes that bridge neighboring cells to allow molecular exchange. Plays a key role in directing the early stages of colony development. In vitro, has a metal-dependent phosphodiesterase activity against 2',3'-cAMP and 2',3'-cGMP. Also has 3',5'-cyclic-nucleotide phosphodiesterase activity, but cannot use cyclic di-AMP or cyclic di-GMP, and does not have phosphatase activity. The chain is 2',3'-cyclic-nucleotide 2'-phosphodiesterase (ymdB) from Bacillus subtilis (strain 168).